Consider the following 557-residue polypeptide: Dihydroxy-acid dehydratase (557 aa).

Position 78 (aspartate 78) interacts with Mg(2+). Cysteine 119 contributes to the [2Fe-2S] cluster binding site. Positions 120 and 121 each coordinate Mg(2+). N6-carboxylysine is present on lysine 121. Residue cysteine 191 coordinates [2Fe-2S] cluster. Glutamate 442 lines the Mg(2+) pocket. Residue serine 468 is the Proton acceptor of the active site.

Belongs to the IlvD/Edd family. In terms of assembly, homodimer. Requires [2Fe-2S] cluster as cofactor. Mg(2+) serves as cofactor.

The catalysed reaction is (2R)-2,3-dihydroxy-3-methylbutanoate = 3-methyl-2-oxobutanoate + H2O. It carries out the reaction (2R,3R)-2,3-dihydroxy-3-methylpentanoate = (S)-3-methyl-2-oxopentanoate + H2O. It participates in amino-acid biosynthesis; L-isoleucine biosynthesis; L-isoleucine from 2-oxobutanoate: step 3/4. Its pathway is amino-acid biosynthesis; L-valine biosynthesis; L-valine from pyruvate: step 3/4. Its function is as follows. Functions in the biosynthesis of branched-chain amino acids. Catalyzes the dehydration of (2R,3R)-2,3-dihydroxy-3-methylpentanoate (2,3-dihydroxy-3-methylvalerate) into 2-oxo-3-methylpentanoate (2-oxo-3-methylvalerate) and of (2R)-2,3-dihydroxy-3-methylbutanoate (2,3-dihydroxyisovalerate) into 2-oxo-3-methylbutanoate (2-oxoisovalerate), the penultimate precursor to L-isoleucine and L-valine, respectively. The protein is Dihydroxy-acid dehydratase of Lachnoclostridium phytofermentans (strain ATCC 700394 / DSM 18823 / ISDg) (Clostridium phytofermentans).